We begin with the raw amino-acid sequence, 121 residues long: Small ribosomal subunit protein uS13 (121 aa).

A disordered region spans residues 89–121 (MRHRRGLPVRGQHTKNNARTRKGKKVSIAGRKK).

This sequence belongs to the universal ribosomal protein uS13 family. In terms of assembly, part of the 30S ribosomal subunit. Forms a loose heterodimer with protein S19. Forms two bridges to the 50S subunit in the 70S ribosome.

Functionally, located at the top of the head of the 30S subunit, it contacts several helices of the 16S rRNA. In the 70S ribosome it contacts the 23S rRNA (bridge B1a) and protein L5 of the 50S subunit (bridge B1b), connecting the 2 subunits; these bridges are implicated in subunit movement. Contacts the tRNAs in the A and P-sites. This chain is Small ribosomal subunit protein uS13, found in Pediococcus pentosaceus (strain ATCC 25745 / CCUG 21536 / LMG 10740 / 183-1w).